We begin with the raw amino-acid sequence, 240 residues long: LexA repressor (240 aa).

The H-T-H motif DNA-binding region spans 26-46 (FDEMKDALDLASKSGIHRLIT). Catalysis depends on for autocatalytic cleavage activity residues serine 160 and lysine 198.

The protein belongs to the peptidase S24 family. Homodimer.

The enzyme catalyses Hydrolysis of Ala-|-Gly bond in repressor LexA.. Functionally, represses a number of genes involved in the response to DNA damage (SOS response), including recA and lexA. In the presence of single-stranded DNA, RecA interacts with LexA causing an autocatalytic cleavage which disrupts the DNA-binding part of LexA, leading to derepression of the SOS regulon and eventually DNA repair. The sequence is that of LexA repressor from Agrobacterium fabrum (strain C58 / ATCC 33970) (Agrobacterium tumefaciens (strain C58)).